The chain runs to 491 residues: MVFGEFFHRPGQDEELVNLNVGGFKQSVDQSTLLRFPHTRLGKLLTCHSEEAILELCDDYSVADKEYYFDRNPSLFRYVLNFYYTGKLHVMEELCVFSFCQEIEYWGINELFIDSCCSNRYQERKEENHEKDWDQKSHDVSTDSSFEESSLFEKELEKFDTLRFGQLRKKIWIRMENPAYCLSAKLIAISSLSVVLASIVAMCVHSMSEFQNEDGEVDDPVLEGVEIACIAWFTGELAVRLAAAPCQKKFWKNPLNIIDFVSIIPFYATLAVDTKEEESEDIENMGKVVQILRLMRIFRILKLARHSVGLRSLGATLRHSYHEVGLLLLFLSVGISIFSVLIYSVEKDDHTSSLTSIPICWWWATISMTTVGYGDTHPVTLAGKLIASTCIICGILVVALPITIIFNKFSKYYQKQKDIDVDQCSEDAPEKCHELPYFNIRDIYAQRMHTFITSLSSVGIVVSDPDSTDASSIEDNEDICNTTSLENCTAK.

Residues 1–182 (MVFGEFFHRP…IRMENPAYCL (182 aa)) are Cytoplasmic-facing. The chain crosses the membrane as a helical span at residues 183–204 (SAKLIAISSLSVVLASIVAMCV). Over 205-220 (HSMSEFQNEDGEVDDP) the chain is Extracellular. A helical transmembrane segment spans residues 221–243 (VLEGVEIACIAWFTGELAVRLAA). The Cytoplasmic portion of the chain corresponds to 244–254 (APCQKKFWKNP). A helical membrane pass occupies residues 255–275 (LNIIDFVSIIPFYATLAVDTK). Residues 276–285 (EEESEDIENM) are Extracellular-facing. Residues 286–306 (GKVVQILRLMRIFRILKLARH) traverse the membrane as a helical; Voltage-sensor segment. At 307–321 (SVGLRSLGATLRHSY) the chain is on the cytoplasmic side. The chain crosses the membrane as a helical span at residues 322-343 (HEVGLLLLFLSVGISIFSVLIY). Residues 344 to 357 (SVEKDDHTSSLTSI) are Extracellular-facing. Positions 358-369 (PICWWWATISMT) form an intramembrane region, helical. Positions 370–375 (TVGYGD) match the Selectivity filter motif. An intramembrane segment occupies 370–377 (TVGYGDTH). The Extracellular portion of the chain corresponds to 378–384 (PVTLAGK). Residues 385–413 (LIASTCIICGILVVALPITIIFNKFSKYY) traverse the membrane as a helical segment. At 414–491 (QKQKDIDVDQ…TTSLENCTAK (78 aa)) the chain is on the cytoplasmic side.

It belongs to the potassium channel family. S (TC 1.A.1.2) subfamily. Kv9.3/KCNS3 sub-subfamily. As to quaternary structure, heterotetramer with KCNB1. Does not form homomultimers. Detected in whole normal term placental and placental chorionic plate arteries and veins. Detected in syncytiotrophoblast and in blood vessel endothelium within intermediate villi and chorionic plate (at protein level). Detected in most tissues, but not in peripheral blood lymphocytes. The highest levels of expression are in lung.

Its subcellular location is the cell membrane. Potassium channel regulatory subunit that modulates the delayed rectifier potassium channel activity of KCNB1 by namely slowing down the deactivation and inactivation time constants. While it does not form functional channel on its own, it can form functional heterotetrameric channels with KCNB1. This Homo sapiens (Human) protein is Delayed-rectifier potassium channel regulatory subunit KCNS3.